Reading from the N-terminus, the 138-residue chain is Protein FAM136A (138 aa).

The protein belongs to the FAM136 family.

This chain is Protein FAM136A (fam136a), found in Xenopus laevis (African clawed frog).